A 494-amino-acid polypeptide reads, in one-letter code: Glutamyl-tRNA(Gln) amidotransferase subunit A (494 aa).

Catalysis depends on charge relay system residues Lys78 and Ser158. The active-site Acyl-ester intermediate is Ser182.

It belongs to the amidase family. GatA subfamily. As to quaternary structure, heterotrimer of A, B and C subunits.

It carries out the reaction L-glutamyl-tRNA(Gln) + L-glutamine + ATP + H2O = L-glutaminyl-tRNA(Gln) + L-glutamate + ADP + phosphate + H(+). In terms of biological role, allows the formation of correctly charged Gln-tRNA(Gln) through the transamidation of misacylated Glu-tRNA(Gln) in organisms which lack glutaminyl-tRNA synthetase. The reaction takes place in the presence of glutamine and ATP through an activated gamma-phospho-Glu-tRNA(Gln). This chain is Glutamyl-tRNA(Gln) amidotransferase subunit A, found in Jannaschia sp. (strain CCS1).